We begin with the raw amino-acid sequence, 286 residues long: ATP synthase gamma chain (286 aa).

The protein belongs to the ATPase gamma chain family. F-type ATPases have 2 components, CF(1) - the catalytic core - and CF(0) - the membrane proton channel. CF(1) has five subunits: alpha(3), beta(3), gamma(1), delta(1), epsilon(1). CF(0) has three main subunits: a, b and c.

It localises to the cell membrane. Functionally, produces ATP from ADP in the presence of a proton gradient across the membrane. The gamma chain is believed to be important in regulating ATPase activity and the flow of protons through the CF(0) complex. This chain is ATP synthase gamma chain, found in Oceanobacillus iheyensis (strain DSM 14371 / CIP 107618 / JCM 11309 / KCTC 3954 / HTE831).